We begin with the raw amino-acid sequence, 100 residues long: Tuberoinfundibular peptide of 39 residues (100 aa).

An N-terminal signal peptide occupies residues 1 to 30; the sequence is METCQMSRSPRERLLLLLLLLLLVPWGTGP. A propeptide spanning residues 31-59 is cleaved from the precursor; that stretch reads ASGVALPLAGVFSLRAPGRAWAGLGSPLS.

It belongs to the parathyroid hormone family. As to quaternary structure, ligand of high affinity for the PTH2 receptor (PTH2R). Expressed in testis and, less abundantly, in liver and kidney. Expressed in seminiferous tubuli and several brain regions, including nucleus ruber, caudal paralemniscal nucleus, nucleus centralis pontis, and nucleus subparafascicularis thalami. Expressed in neurons of cerebral cortex and subcortical areas. Expressed in Purkinje cells of cerebellum.

The protein localises to the secreted. In terms of biological role, plays a role as a potent and selective agonist of PTH2R resulting in adenyl cyclase activation and intracellular calcium levels elevation. Induces protein kinase C beta activation, recruitment of beta-arrestin and PTH2R internalization. May inhibit cell proliferation via its action of PTH2R activation. Neuropeptide which may also have a role in spermatogenesis. May activate nociceptors and nociceptive circuits. This is Tuberoinfundibular peptide of 39 residues (Pth2) from Mus musculus (Mouse).